The following is a 431-amino-acid chain: Enolase (431 aa).

Residue Q166 coordinates (2R)-2-phosphoglycerate. E208 acts as the Proton donor in catalysis. D245, E289, and D316 together coordinate Mg(2+). (2R)-2-phosphoglycerate is bound by residues K341, R370, S371, and K392. K341 acts as the Proton acceptor in catalysis.

The protein belongs to the enolase family. The cofactor is Mg(2+).

The protein localises to the cytoplasm. It is found in the secreted. It localises to the cell surface. It catalyses the reaction (2R)-2-phosphoglycerate = phosphoenolpyruvate + H2O. Its pathway is carbohydrate degradation; glycolysis; pyruvate from D-glyceraldehyde 3-phosphate: step 4/5. Functionally, catalyzes the reversible conversion of 2-phosphoglycerate (2-PG) into phosphoenolpyruvate (PEP). It is essential for the degradation of carbohydrates via glycolysis. This is Enolase from Ruminiclostridium cellulolyticum (strain ATCC 35319 / DSM 5812 / JCM 6584 / H10) (Clostridium cellulolyticum).